The sequence spans 560 residues: Triacylglyceride transporter MSMEG_3069/MSMEI_2992 (560 aa).

14 helical membrane passes run 16–36 (LAVL…VDIM), 48–68 (QVTP…PLLG), 78–98 (MLIQ…ALSS), 108–128 (IIQG…AADL), 143–163 (AAQE…VWLF), 168–188 (AVFW…HFSL), 200–220 (VDVI…VGLY), 229–249 (VLPS…VAFF), 269–289 (PFLA…VTLV), 307–327 (AFLL…GGWL), 336–356 (VVLI…HWSV), 368–388 (FTLP…GLVI), 411–431 (VVVA…AWGF), and 477–497 (IFLS…LISG). Residues 362–371 (RHNLGLFTLP) are beta-hairpin. The segment at 519 to 560 (IDPYDAGDADDAPTEMLDLPTQVLSAPPSDPGDERPGRHRAP) is disordered.

This sequence belongs to the major facilitator superfamily. P55 (TC 2.A.1.3.34) family.

It localises to the cell inner membrane. Resistance to ethidium bromide is inhibited by reserpine. In association with lipoprotein LprG transports triacyglycerides (TAG) across the inner cell membrane into the periplasm; TAG probably regulates lipid metabolism and growth regulation and plays a structural role in the outer membrane. TAG (and maybe other lipids) enters the central cavity of the P55 transporter from within the cell inner membrane via clefts on the cytoplasmic face of P55 between TM5-TM8 and TM2-TM11. From there the lipid is probably transferred to the hydrophobic cavity of LprG. Confers resistance to ethidium bromide, possibly acting as an efflux pump, requires LprG lipoprotein for normal function. Export of ethidium bromide can be complemented by the equivalent operon from M.tuberculosis (lprG-Rv1410c). Involved in drug susceptibilty, its expression alone partially complements the antibiotic susceptibilty of a double lprG-mfs deletion. Probably does not function as a bona fide drug efflux pump, but instead plays a role in outer membrane biogenesis. Probably required with LprG for normal surface localization of lipoarabinomannan (LAM). The chain is Triacylglyceride transporter MSMEG_3069/MSMEI_2992 from Mycolicibacterium smegmatis (strain ATCC 700084 / mc(2)155) (Mycobacterium smegmatis).